The chain runs to 157 residues: Lipoprotein signal peptidase (157 aa).

Helical transmembrane passes span Leu10–Ile30, Phe58–Leu78, and Leu84–Leu104. Catalysis depends on residues Asp114 and Asp131. A helical transmembrane segment spans residues Phe122–Leu142.

It belongs to the peptidase A8 family.

It localises to the cell inner membrane. The catalysed reaction is Release of signal peptides from bacterial membrane prolipoproteins. Hydrolyzes -Xaa-Yaa-Zaa-|-(S,diacylglyceryl)Cys-, in which Xaa is hydrophobic (preferably Leu), and Yaa (Ala or Ser) and Zaa (Gly or Ala) have small, neutral side chains.. The protein operates within protein modification; lipoprotein biosynthesis (signal peptide cleavage). Its function is as follows. This protein specifically catalyzes the removal of signal peptides from prolipoproteins. This Helicobacter pylori (strain Shi470) protein is Lipoprotein signal peptidase.